The sequence spans 125 residues: Oxytocin-neurophysin 1 (125 aa).

Positions 1–19 are cleaved as a signal peptide; sequence MAGSSLACCLLGLLALTSA. Cysteine 20 and cysteine 25 are disulfide-bonded. Residue glycine 28 is modified to Glycine amide. Cystine bridges form between cysteine 41–cysteine 85, cysteine 44–cysteine 58, cysteine 52–cysteine 75, cysteine 59–cysteine 65, cysteine 92–cysteine 104, cysteine 98–cysteine 116, and cysteine 105–cysteine 110.

This sequence belongs to the vasopressin/oxytocin family. In terms of assembly, interacts with oxytocin receptor (Ki=1.5 nM). Interacts with vasopressin V1aR/AVPR1A (Ki=37 nM), V1bR/AVPR1B (Ki=222 nM), and V2R/AVPR2 receptors (Ki=823 nM).

It is found in the secreted. Its function is as follows. Neurophysin 1 specifically binds oxytocin. Oxytocin causes contraction of the smooth muscle of the uterus and of the mammary gland. Acts by binding to oxytocin receptor (OXTR). In Bos taurus (Bovine), this protein is Oxytocin-neurophysin 1 (OXT).